Reading from the N-terminus, the 155-residue chain is Small ribosomal subunit protein uS7c (155 aa).

This sequence belongs to the universal ribosomal protein uS7 family. As to quaternary structure, part of the 30S ribosomal subunit.

It is found in the plastid. The protein localises to the chloroplast. Its function is as follows. One of the primary rRNA binding proteins, it binds directly to 16S rRNA where it nucleates assembly of the head domain of the 30S subunit. The sequence is that of Small ribosomal subunit protein uS7c (rps7) from Spathiphyllum wallisii (Peace lily).